The primary structure comprises 574 residues: Glutamyl-tRNA(Gln) amidotransferase subunit B, mitochondrial (574 aa).

It belongs to the GatB/GatE family. GatB subfamily. Subunit of the heterotrimeric GatCAB amidotransferase (AdT) complex, composed of A, B and C subunits.

Its subcellular location is the mitochondrion. It carries out the reaction L-glutamyl-tRNA(Gln) + L-glutamine + ATP + H2O = L-glutaminyl-tRNA(Gln) + L-glutamate + ADP + phosphate + H(+). In terms of biological role, allows the formation of correctly charged Gln-tRNA(Gln) through the transamidation of misacylated Glu-tRNA(Gln) in the mitochondria. The reaction takes place in the presence of glutamine and ATP through an activated gamma-phospho-Glu-tRNA(Gln). The polypeptide is Glutamyl-tRNA(Gln) amidotransferase subunit B, mitochondrial (Phytophthora infestans (strain T30-4) (Potato late blight agent)).